The chain runs to 356 residues: Ribosomal RNA large subunit methyltransferase M (356 aa).

Residues Ser187, 220 to 223 (CPGG), Asp239, Asp259, and Asp276 each bind S-adenosyl-L-methionine. Catalysis depends on Lys305, which acts as the Proton acceptor.

Belongs to the class I-like SAM-binding methyltransferase superfamily. RNA methyltransferase RlmE family. RlmM subfamily. As to quaternary structure, monomer.

It is found in the cytoplasm. It carries out the reaction cytidine(2498) in 23S rRNA + S-adenosyl-L-methionine = 2'-O-methylcytidine(2498) in 23S rRNA + S-adenosyl-L-homocysteine + H(+). In terms of biological role, catalyzes the 2'-O-methylation at nucleotide C2498 in 23S rRNA. The chain is Ribosomal RNA large subunit methyltransferase M from Pseudoalteromonas atlantica (strain T6c / ATCC BAA-1087).